Here is a 322-residue protein sequence, read N- to C-terminus: 4-diphosphocytidyl-2-C-methyl-D-erythritol kinase (322 aa).

Lys-18 is an active-site residue. 130–140 (PMGAGLGGGSS) serves as a coordination point for ATP. The active site involves Asp-172.

Belongs to the GHMP kinase family. IspE subfamily.

It carries out the reaction 4-CDP-2-C-methyl-D-erythritol + ATP = 4-CDP-2-C-methyl-D-erythritol 2-phosphate + ADP + H(+). The protein operates within isoprenoid biosynthesis; isopentenyl diphosphate biosynthesis via DXP pathway; isopentenyl diphosphate from 1-deoxy-D-xylulose 5-phosphate: step 3/6. In terms of biological role, catalyzes the phosphorylation of the position 2 hydroxy group of 4-diphosphocytidyl-2C-methyl-D-erythritol. This Psychrobacter arcticus (strain DSM 17307 / VKM B-2377 / 273-4) protein is 4-diphosphocytidyl-2-C-methyl-D-erythritol kinase.